The chain runs to 317 residues: Ubiquinone biosynthesis protein COQ9-A, mitochondrial (317 aa).

The N-terminal 46 residues, 1-46 (MAASVTRVLKGAGGRQLLLMVARRRPVLMQPFLLMPRKFWVSSALR), are a transit peptide targeting the mitochondrion. A disordered region spans residues 50 to 97 (QRQPPFSASSTHAETQGHAEEQYQQKQPPPRYTDQAGEESEGYESEEQ). Positions 53 to 63 (PPFSASSTHAE) are enriched in polar residues. Residues 85–96 (AGEESEGYESEE) show a composition bias toward acidic residues. Arginine 243 lines the a 1,2-diacylglycero-3-phosphoethanolamine pocket.

This sequence belongs to the COQ9 family. Homodimer. Heterodimer; two heterodimers of COQ7:COQ9 come together on the same side of the lipid pseudo-bilayer and form a curved tetramer with a hydrophobic surface suitable for membrane interaction. These two tetramers assemble into a soluble octamer with a pseudo-bilayer of lipids captured within. Interacts with COQ7; this interaction allows ubiquinone (CoQ) isoprene intermediates presentation to COQ7 and facilitates the COQ7-mediated hydroxylase step.

It localises to the mitochondrion. The protein operates within cofactor biosynthesis; ubiquinone biosynthesis. Its function is as follows. Membrane-associated protein that warps the membrane surface to access and bind aromatic isoprenes with high specificity, including ubiquinone (CoQ) isoprene intermediates and presents them directly to COQ7, therefore facilitating the COQ7-mediated hydroxylase step. Participates in the biosynthesis of coenzyme Q, also named ubiquinone, an essential lipid-soluble electron transporter for aerobic cellular respiration. The sequence is that of Ubiquinone biosynthesis protein COQ9-A, mitochondrial (coq9-a) from Xenopus laevis (African clawed frog).